The sequence spans 396 residues: DNA polymerase IV (396 aa).

The region spanning Ile5–Gly192 is the UmuC domain. Residues Asp9 and Asp111 each coordinate Mg(2+). Residue Glu112 is part of the active site.

The protein belongs to the DNA polymerase type-Y family. Monomer. Mg(2+) serves as cofactor.

The protein localises to the cytoplasm. The catalysed reaction is DNA(n) + a 2'-deoxyribonucleoside 5'-triphosphate = DNA(n+1) + diphosphate. Poorly processive, error-prone DNA polymerase involved in untargeted mutagenesis. Copies undamaged DNA at stalled replication forks, which arise in vivo from mismatched or misaligned primer ends. These misaligned primers can be extended by PolIV. Exhibits no 3'-5' exonuclease (proofreading) activity. May be involved in translesional synthesis, in conjunction with the beta clamp from PolIII. In Clostridium acetobutylicum (strain ATCC 824 / DSM 792 / JCM 1419 / IAM 19013 / LMG 5710 / NBRC 13948 / NRRL B-527 / VKM B-1787 / 2291 / W), this protein is DNA polymerase IV.